The following is a 277-amino-acid chain: Putative serine/threonine-protein kinase PRKY (277 aa).

A compositionally biased stretch (low complexity) spans 1 to 12 (MEAPGPAQAAAA). The interval 1 to 40 (MEAPGPAQAAAAESNSREVTEDAADWAPALCPSPEARSPE) is disordered. In terms of domain architecture, Protein kinase spans 49–277 (CDALVTMGTG…DFHVKTGRMM (229 aa)). ATP is bound by residues 55-63 (MGTGTFGRV) and K78. The active-site Proton acceptor is the D172. T203 is modified (phosphothreonine).

The protein belongs to the protein kinase superfamily. AGC Ser/Thr protein kinase family. cAMP subfamily. As to expression, ubiquitous.

The enzyme catalyses L-seryl-[protein] + ATP = O-phospho-L-seryl-[protein] + ADP + H(+). It catalyses the reaction L-threonyl-[protein] + ATP = O-phospho-L-threonyl-[protein] + ADP + H(+). This Homo sapiens (Human) protein is Putative serine/threonine-protein kinase PRKY (PRKY).